The primary structure comprises 348 residues: UDP-glucose 4-epimerase (348 aa).

T125 contacts substrate. Catalysis depends on Y149, which acts as the Proton acceptor.

It belongs to the NAD(P)-dependent epimerase/dehydratase family. Requires NAD(+) as cofactor.

The catalysed reaction is UDP-alpha-D-glucose = UDP-alpha-D-galactose. The protein operates within carbohydrate metabolism; galactose metabolism. It functions in the pathway glycan metabolism; exopolysaccharide biosynthesis. This chain is UDP-glucose 4-epimerase (exoB), found in Azospirillum brasilense.